Consider the following 426-residue polypeptide: Trigger factor (426 aa).

The PPIase FKBP-type domain maps to glycine 166–proline 249.

This sequence belongs to the FKBP-type PPIase family. Tig subfamily.

The protein localises to the cytoplasm. The enzyme catalyses [protein]-peptidylproline (omega=180) = [protein]-peptidylproline (omega=0). In terms of biological role, involved in protein export. Acts as a chaperone by maintaining the newly synthesized protein in an open conformation. Functions as a peptidyl-prolyl cis-trans isomerase. The chain is Trigger factor from Mesoplasma florum (strain ATCC 33453 / NBRC 100688 / NCTC 11704 / L1) (Acholeplasma florum).